A 228-amino-acid chain; its full sequence is Ribose-5-phosphate isomerase A (228 aa).

Substrate is bound by residues 29–32 (TGST), 85–88 (DGAD), and 98–101 (KGGG). Glu107 functions as the Proton acceptor in the catalytic mechanism. Position 125 (Lys125) interacts with substrate.

The protein belongs to the ribose 5-phosphate isomerase family. In terms of assembly, homodimer.

It catalyses the reaction aldehydo-D-ribose 5-phosphate = D-ribulose 5-phosphate. The protein operates within carbohydrate degradation; pentose phosphate pathway; D-ribose 5-phosphate from D-ribulose 5-phosphate (non-oxidative stage): step 1/1. Catalyzes the reversible conversion of ribose-5-phosphate to ribulose 5-phosphate. This chain is Ribose-5-phosphate isomerase A, found in Staphylococcus aureus (strain Mu50 / ATCC 700699).